Consider the following 400-residue polypeptide: Canavanine gamma-lyase (400 aa).

N6-(pyridoxal phosphate)lysine is present on Lys213.

It belongs to the trans-sulfuration enzymes family. Pyridoxal 5'-phosphate serves as cofactor.

The catalysed reaction is L-canavanine + H2O = N-hydroxyguanidine + L-homoserine. Its function is as follows. Lyase involved in the degradation of canavanine, the delta-oxa-analog of arginine, allowing growth on canavanine as sole nitrogen and carbon source. Catalyzes the elimination of hydroxyguanidine from canavanine with a subsequent water addition to yield homoserine. Is highly specific for canavanine and cannot use methionine, cystathionine or arginine. In Pseudomonas canavaninivorans, this protein is Canavanine gamma-lyase.